Reading from the N-terminus, the 2431-residue chain is Reducing polyketide synthase rads1 (2431 aa).

A Ketosynthase family 3 (KS3) domain is found at 10-440 (RAPIAIIGLA…GTNAHIVLER (431 aa)). Active-site for beta-ketoacyl synthase activity residues include Cys184, His319, and His363. The malonyl-CoA:ACP transacylase (MAT) domain stretch occupies residues 558–895 (FVFTGQGAQW…NLAAELFRRG (338 aa)). The tract at residues 944–1080 (KSILGAELPS…GLISIAYEDT (137 aa)) is N-terminal hotdog fold. One can recognise a PKS/mFAS DH domain in the interval 944-1267 (KSILGAELPS…LAELEVDDAA (324 aa)). The dehydratase (DH) domain stretch occupies residues 946 to 1264 (ILGAELPSMD…DFRLAELEVD (319 aa)). The active-site Proton acceptor; for dehydratase activity is the His976. A C-terminal hotdog fold region spans residues 1108 to 1267 (PETCSKERFY…LAELEVDDAA (160 aa)). The active-site Proton donor; for dehydratase activity is the Asp1174. Residues 1705 to 2023 (GLLNTLHFVP…QGKHLGKMIL (319 aa)) are enoyl reductase (ER) domain. The Phosphocysteine intermediate role is filled by Cys1822. Residues 2048 to 2228 (ATYLIVGGLG…VSVNLGIMRD (181 aa)) are ketoreductase (KR) domain. The Carrier domain maps to 2346-2423 (VAAAIITEAL…TFAVQIAKKS (78 aa)). At Ser2383 the chain carries O-(pantetheine 4'-phosphoryl)serine.

Its pathway is secondary metabolite biosynthesis. Reducing polyketide synthase; part of the gene cluster that mediates the biosynthesis of radicicol, a resorcylic acid lactone (RAL) that irreversibly inhibits the HSP90 molecular chaperone, an important target for cancer chemotherapy. The cluster encodes only two apparent post-PKS enzymes, a cytochrome P450 monooxygenase (radP) and a non-heme halogenase (radH) that introduce the epoxide and the chlorine, respectively. If this cluster includes all the genes required for radicicol biosynthesis, the remaining structural features of radicicol are presumably generated by the PKSs rads1 and rads2. The C-2' ketone could arise if the R-PKS rads1 and NR-PKS rads2 each carry out four iterations, in contrast to the five iteration-three iteration split for the hypothemycin PKSs. The origin of the cis 5',6' double bond is not known. The radicicol R-PKS radS1 ER domain may catalyze either double bond isomerization or reduction in the third iteration. The chain is Reducing polyketide synthase rads1 from Floropilus chiversii (Chaetomium chiversii).